Reading from the N-terminus, the 560-residue chain is Choline/ethanolamine transporter FLVCR1 (560 aa).

Residues 1 to 43 form a disordered region; it reads MARPDDEVGPAVAPGHPLGKGYLPVPKGAPDGEARLVPQNGPE. Residues 1 to 92 lie on the Cytoplasmic side of the membrane; the sequence is MARPDDEVGP…EDVPCPACPP (92 aa). A helical membrane pass occupies residues 93-117; it reads RTALSPRRFVVLLIFSLYSLVNAFQ. Residues 118 to 135 lie on the Extracellular side of the membrane; it reads WIQYSSISNVFEDFYEVS. The chain crosses the membrane as a helical span at residues 136 to 163; it reads PLHINWLSMVYMVAYVPLIFPATWLLDT. The Cytoplasmic segment spans residues 164-165; the sequence is RG. Residues 166–185 form a helical membrane-spanning segment; the sequence is LRLTALLGSGLNCLGAWVKC. Residues 186–192 are Extracellular-facing; that stretch reads GSVQRHL. Residues 193-221 traverse the membrane as a helical segment; that stretch reads FWVTMLGQILCSVAQVFILGLPSPVASVW. Residue glutamine 207 coordinates ethanolamine. Residues 222–226 lie on the Cytoplasmic side of the membrane; the sequence is FGPKE. Residues 227-252 traverse the membrane as a helical segment; sequence VSTACATAVLGNQLGTAVGFLLPPVL. Topologically, residues 253-270 are extracellular; sequence VPALGTQNSTGLLAHTQN. Asparagine 270 is a glycosylation site (N-linked (GlcNAc...) asparagine). A helical transmembrane segment spans residues 271-300; the sequence is NTDLLAHNINTMFYGTAFISTFLFFLTIIA. The Cytoplasmic segment spans residues 301–336; sequence FKEKPPLPPSQAQAVLRDSPPEEYSYKSSIWNLCRN. A helical membrane pass occupies residues 337 to 367; the sequence is IPFVLLLVSYGIMTGAFYSISTLLNQIILTY. At 368-371 the chain is on the extracellular side; the sequence is YVGE. Residues 372-400 traverse the membrane as a helical segment; the sequence is EVNAGRIGLTLVVAGMVGSILCGLWLDYT. Over 401 to 402 the chain is Cytoplasmic; sequence KT. Residues 403 to 425 traverse the membrane as a helical segment; sequence YKQTTLIVYVLSFIGMLIFTFTL. The Extracellular portion of the chain corresponds to 426–428; it reads NLG. The chain crosses the membrane as a helical span at residues 429–458; sequence YIIVVFFTGGILGFFMTGYLPLGFEFAVEI. Topologically, residues 459–466 are cytoplasmic; it reads TYPESEGM. The chain crosses the membrane as a helical span at residues 467–492; it reads SSGLLNTAAQILGIFFTLAQGKITTD. Residue glutamine 476 coordinates ethanolamine. Glutamine 476 serves as a coordination point for choline. At 493–495 the chain is on the extracellular side; that stretch reads YNS. A helical membrane pass occupies residues 496 to 518; the sequence is PEAGNIFLCAWMFVGIILTALIK. Over 519–560 the chain is Cytoplasmic; it reads SDLRRHNINTGLTNIDVKAVPVDSRVDPKPKVMVSIQSESSL. Serine 542 bears the Phosphoserine mark.

The protein belongs to the major facilitator superfamily. Feline leukemia virus subgroup C receptor (TC 2.A.1.28.1) family.

The protein resides in the cell membrane. It is found in the mitochondrion membrane. The catalysed reaction is choline(out) = choline(in). It carries out the reaction ethanolamine(in) = ethanolamine(out). It catalyses the reaction heme b(in) = heme b(out). Functionally, uniporter that mediates the transport of extracellular choline and ethanolamine into cells, thereby playing a key role in phospholipid biosynthesis. Choline and ethanolamine are the precursors of phosphatidylcholine and phosphatidylethanolamine, respectively, the two most abundant phospholipids. Transport is not coupled with proton transport and is exclusively driven by the choline (or ethanolamine) gradient across the plasma membrane. Also acts as a heme b transporter that mediates heme efflux from the cytoplasm to the extracellular compartment. Its function is as follows. Uniporter that mediates the transport of extracellular choline and ethanolamine into cells. Choline and ethanolamine are the precursors of phosphatidylcholine and phosphatidylethanolamine, respectively, the two most abundant phospholipids. Transport is not coupled with proton transport and is exclusively driven by the choline (or ethanolamine) gradient across the plasma membrane. Also acts as a heme b transporter that mediates heme efflux from the cytoplasm to the extracellular compartment. Heme export depends on the presence of HPX and is required to maintain intracellular free heme balance, protecting cells from heme toxicity. Heme export provides protection from heme or ferrous iron toxicities in liver, brain, sensory neurons and during erythropoiesis, a process in which heme synthesis intensifies. Possibly export coproporphyrin and protoporphyrin IX, which are both intermediate products in the heme biosynthetic pathway. Does not export bilirubin. The molecular mechanism of heme transport, whether electrogenic, electroneutral or coupled to other ions, remains to be elucidated. Heme transporter that promotes heme efflux from the mitochondrion to the cytoplasm. Essential for erythroid differentiation. The protein is Choline/ethanolamine transporter FLVCR1 (Flvcr1) of Mus musculus (Mouse).